Here is a 30-residue protein sequence, read N- to C-terminus: NADH-ubiquinone oxidoreductase 18 kDa subunit (30 aa).

In terms of assembly, complex I is composed of about 45 different subunits.

The protein localises to the mitochondrion inner membrane. The enzyme catalyses a ubiquinone + NADH + 5 H(+)(in) = a ubiquinol + NAD(+) + 4 H(+)(out). In terms of biological role, transfer of electrons from NADH to the respiratory chain. The immediate electron acceptor for the enzyme is believed to be ubiquinone. The sequence is that of NADH-ubiquinone oxidoreductase 18 kDa subunit from Solanum tuberosum (Potato).